A 216-amino-acid polypeptide reads, in one-letter code: Protein-L-isoaspartate O-methyltransferase (216 aa).

Residue S62 is part of the active site.

It belongs to the methyltransferase superfamily. L-isoaspartyl/D-aspartyl protein methyltransferase family.

The protein localises to the cytoplasm. The catalysed reaction is [protein]-L-isoaspartate + S-adenosyl-L-methionine = [protein]-L-isoaspartate alpha-methyl ester + S-adenosyl-L-homocysteine. Catalyzes the methyl esterification of L-isoaspartyl residues in peptides and proteins that result from spontaneous decomposition of normal L-aspartyl and L-asparaginyl residues. It plays a role in the repair and/or degradation of damaged proteins. In Methanospirillum hungatei JF-1 (strain ATCC 27890 / DSM 864 / NBRC 100397 / JF-1), this protein is Protein-L-isoaspartate O-methyltransferase.